Here is a 689-residue protein sequence, read N- to C-terminus: Elongation factor G (689 aa).

The 275-residue stretch at 8–282 (KKTRNIGIMA…AVIDYLPSPV (275 aa)) folds into the tr-type G domain. GTP-binding positions include 17 to 24 (AHIDAGKT), 81 to 85 (DTPGH), and 135 to 138 (NKMD).

This sequence belongs to the TRAFAC class translation factor GTPase superfamily. Classic translation factor GTPase family. EF-G/EF-2 subfamily.

The protein resides in the cytoplasm. In terms of biological role, catalyzes the GTP-dependent ribosomal translocation step during translation elongation. During this step, the ribosome changes from the pre-translocational (PRE) to the post-translocational (POST) state as the newly formed A-site-bound peptidyl-tRNA and P-site-bound deacylated tRNA move to the P and E sites, respectively. Catalyzes the coordinated movement of the two tRNA molecules, the mRNA and conformational changes in the ribosome. The sequence is that of Elongation factor G from Halothermothrix orenii (strain H 168 / OCM 544 / DSM 9562).